A 414-amino-acid chain; its full sequence is Ribulose bisphosphate carboxylase large chain (414 aa).

Substrate contacts are provided by N101 and T151. K153 serves as the catalytic Proton acceptor. Position 155 (K155) interacts with substrate. Positions 179, 181, and 182 each coordinate Mg(2+). K179 is modified (N6-carboxylysine). The active-site Proton acceptor is the H272. Residues R273, H305, and S357 each contribute to the substrate site.

The protein belongs to the RuBisCO large chain family. Type I subfamily. As to quaternary structure, heterohexadecamer of 8 large chains and 8 small chains; disulfide-linked. The disulfide link is formed within the large subunit homodimers. Requires Mg(2+) as cofactor. The disulfide bond which can form in the large chain dimeric partners within the hexadecamer appears to be associated with oxidative stress and protein turnover.

It localises to the plastid. Its subcellular location is the chloroplast. The catalysed reaction is 2 (2R)-3-phosphoglycerate + 2 H(+) = D-ribulose 1,5-bisphosphate + CO2 + H2O. It carries out the reaction D-ribulose 1,5-bisphosphate + O2 = 2-phosphoglycolate + (2R)-3-phosphoglycerate + 2 H(+). In terms of biological role, ruBisCO catalyzes two reactions: the carboxylation of D-ribulose 1,5-bisphosphate, the primary event in carbon dioxide fixation, as well as the oxidative fragmentation of the pentose substrate in the photorespiration process. Both reactions occur simultaneously and in competition at the same active site. This is Ribulose bisphosphate carboxylase large chain (rbcL) from Onychium japonicum (Japanese claw fern).